Reading from the N-terminus, the 124-residue chain is Fluoride-specific ion channel FluC (124 aa).

4 helical membrane-spanning segments follow: residues 4–24 (VLFVALGGSIGAVLRYLISLL), 35–55 (FGTLVVNILGSFLMGVIFALG), 62–82 (PEFKAFIGVGMLGALTTFSTF), and 95–115 (LVKAVFNVVVNVGVCIFVVYL). The Na(+) site is built by glycine 74 and threonine 77.

It belongs to the fluoride channel Fluc/FEX (TC 1.A.43) family.

It localises to the cell inner membrane. It catalyses the reaction fluoride(in) = fluoride(out). Na(+) is not transported, but it plays an essential structural role and its presence is essential for fluoride channel function. Fluoride-specific ion channel. Important for reducing fluoride concentration in the cell, thus reducing its toxicity. This chain is Fluoride-specific ion channel FluC, found in Shewanella pealeana (strain ATCC 700345 / ANG-SQ1).